Consider the following 415-residue polypeptide: Protein maelstrom homolog (415 aa).

Residues 4 to 73 (KKAARNAYFF…DPDSTSTYND (70 aa)) constitute a DNA-binding region (HMG box). A disordered region spans residues 367–399 (SSDPKYSTDKSERSSFEPRGVKPYQGPSGGGRG). Over residues 372–386 (YSTDKSERSSFEPRG) the composition is skewed to basic and acidic residues.

This sequence belongs to the maelstrom family.

It localises to the cytoplasm. Its subcellular location is the nucleus. Functionally, plays a central role during spermatogenesis by repressing transposable elements and preventing their mobilization, which is essential for the germline integrity. Acts via the piRNA metabolic process, which mediates the repression of transposable elements during meiosis by forming complexes composed of piRNAs and Piwi proteins and governs the methylation and subsequent repression of transposons. Its association with piP-bodies suggests a participation in the secondary piRNAs metabolic process. Required for the localization of germ-cell factors to the meiotic nuage. This Xenopus tropicalis (Western clawed frog) protein is Protein maelstrom homolog (mael).